The following is a 194-amino-acid chain: Imidazoleglycerol-phosphate dehydratase (194 aa).

This sequence belongs to the imidazoleglycerol-phosphate dehydratase family.

The protein resides in the cytoplasm. It carries out the reaction D-erythro-1-(imidazol-4-yl)glycerol 3-phosphate = 3-(imidazol-4-yl)-2-oxopropyl phosphate + H2O. The protein operates within amino-acid biosynthesis; L-histidine biosynthesis; L-histidine from 5-phospho-alpha-D-ribose 1-diphosphate: step 6/9. The sequence is that of Imidazoleglycerol-phosphate dehydratase from Listeria monocytogenes serotype 4a (strain HCC23).